Reading from the N-terminus, the 341-residue chain is Phosphoribosylformylglycinamidine cyclo-ligase (341 aa).

Belongs to the AIR synthase family.

Its subcellular location is the cytoplasm. It carries out the reaction 2-formamido-N(1)-(5-O-phospho-beta-D-ribosyl)acetamidine + ATP = 5-amino-1-(5-phospho-beta-D-ribosyl)imidazole + ADP + phosphate + H(+). It participates in purine metabolism; IMP biosynthesis via de novo pathway; 5-amino-1-(5-phospho-D-ribosyl)imidazole from N(2)-formyl-N(1)-(5-phospho-D-ribosyl)glycinamide: step 2/2. In Picosynechococcus sp. (strain ATCC 27264 / PCC 7002 / PR-6) (Agmenellum quadruplicatum), this protein is Phosphoribosylformylglycinamidine cyclo-ligase.